Consider the following 145-residue polypeptide: D-aminoacyl-tRNA deacylase (145 aa).

The Gly-cisPro motif, important for rejection of L-amino acids signature appears at 137-138 (GP).

This sequence belongs to the DTD family. In terms of assembly, homodimer.

It is found in the cytoplasm. It carries out the reaction glycyl-tRNA(Ala) + H2O = tRNA(Ala) + glycine + H(+). It catalyses the reaction a D-aminoacyl-tRNA + H2O = a tRNA + a D-alpha-amino acid + H(+). In terms of biological role, an aminoacyl-tRNA editing enzyme that deacylates mischarged D-aminoacyl-tRNAs. Also deacylates mischarged glycyl-tRNA(Ala), protecting cells against glycine mischarging by AlaRS. Acts via tRNA-based rather than protein-based catalysis; rejects L-amino acids rather than detecting D-amino acids in the active site. By recycling D-aminoacyl-tRNA to D-amino acids and free tRNA molecules, this enzyme counteracts the toxicity associated with the formation of D-aminoacyl-tRNA entities in vivo and helps enforce protein L-homochirality. This chain is D-aminoacyl-tRNA deacylase, found in Lactobacillus delbrueckii subsp. bulgaricus (strain ATCC BAA-365 / Lb-18).